The following is a 326-amino-acid chain: ATP phosphoribosyltransferase regulatory subunit (326 aa).

This sequence belongs to the class-II aminoacyl-tRNA synthetase family. HisZ subfamily. In terms of assembly, heteromultimer composed of HisG and HisZ subunits.

Its subcellular location is the cytoplasm. Its pathway is amino-acid biosynthesis; L-histidine biosynthesis; L-histidine from 5-phospho-alpha-D-ribose 1-diphosphate: step 1/9. Required for the first step of histidine biosynthesis. May allow the feedback regulation of ATP phosphoribosyltransferase activity by histidine. This chain is ATP phosphoribosyltransferase regulatory subunit, found in Streptococcus thermophilus (strain ATCC BAA-491 / LMD-9).